The primary structure comprises 336 residues: Cell division protein ZipA (336 aa).

Residues 1 to 6 (MEDLQL) are Periplasmic-facing. Residues 7-27 (VLFVLGAIAIIAVLVHGFWSI) form a helical membrane-spanning segment. At 28 to 336 (RKQQPKPIKE…DYLRRIKAIV (309 aa)) the chain is on the cytoplasmic side. 2 disordered regions span residues 31 to 118 (QPKP…PVRA) and 174 to 200 (YGAT…EPLG). Over residues 73–91 (LPSSRNHTSVPVMTLQKAS) the composition is skewed to polar residues. Positions 108-118 (TTAERAEPVRA) are enriched in basic and acidic residues. Positions 179–193 (QASPQPASPVQSQAP) are enriched in low complexity.

It belongs to the ZipA family. As to quaternary structure, interacts with FtsZ via their C-terminal domains.

It is found in the cell inner membrane. Its function is as follows. Essential cell division protein that stabilizes the FtsZ protofilaments by cross-linking them and that serves as a cytoplasmic membrane anchor for the Z ring. Also required for the recruitment to the septal ring of downstream cell division proteins. This is Cell division protein ZipA from Shewanella denitrificans (strain OS217 / ATCC BAA-1090 / DSM 15013).